Consider the following 291-residue polypeptide: Elongation factor Ts (291 aa).

The tract at residues 79 to 82 is involved in Mg(2+) ion dislocation from EF-Tu; that stretch reads TDFV.

This sequence belongs to the EF-Ts family.

Its subcellular location is the cytoplasm. Functionally, associates with the EF-Tu.GDP complex and induces the exchange of GDP to GTP. It remains bound to the aminoacyl-tRNA.EF-Tu.GTP complex up to the GTP hydrolysis stage on the ribosome. The chain is Elongation factor Ts from Stenotrophomonas maltophilia (strain K279a).